The primary structure comprises 417 residues: NADH-quinone oxidoreductase subunit D (417 aa).

Belongs to the complex I 49 kDa subunit family. As to quaternary structure, NDH-1 is composed of 14 different subunits. Subunits NuoB, C, D, E, F, and G constitute the peripheral sector of the complex.

The protein localises to the cell inner membrane. The catalysed reaction is a quinone + NADH + 5 H(+)(in) = a quinol + NAD(+) + 4 H(+)(out). Functionally, NDH-1 shuttles electrons from NADH, via FMN and iron-sulfur (Fe-S) centers, to quinones in the respiratory chain. The immediate electron acceptor for the enzyme in this species is believed to be ubiquinone. Couples the redox reaction to proton translocation (for every two electrons transferred, four hydrogen ions are translocated across the cytoplasmic membrane), and thus conserves the redox energy in a proton gradient. The protein is NADH-quinone oxidoreductase subunit D of Burkholderia mallei (strain NCTC 10247).